We begin with the raw amino-acid sequence, 801 residues long: uncharacterized protein (801 aa).

Residues 1-93 form the PE domain; that stretch reads MSWVMVSPEL…GGAYAAAEAA (93 aa).

It belongs to the mycobacterial PE family. PGRS subfamily.

This is an uncharacterized protein from Mycobacterium tuberculosis (strain ATCC 25618 / H37Rv).